Consider the following 203-residue polypeptide: uncharacterized protein (203 aa).

Disordered stretches follow at residues 65–84 (LSLSEDEDEDESELEDSFDS) and 92–170 (SSSS…ETAL). Acidic residues-rich tracts occupy residues 68 to 82 (SEDEDEDESELEDSF) and 98 to 110 (SEEESEEEEEESL). The segment covering 111–122 (DSSFLVSASLSL) has biased composition (low complexity). Positions 123 to 168 (SEDDEEEDSESEDEDEDEDSDSDSDSDSDSDEDEDEDEDSEEEEET) are enriched in acidic residues. Residues 182–202 (TSFLLPFTLVVLAILFYPAWV) traverse the membrane as a helical segment.

It localises to the membrane. This is an uncharacterized protein from Saccharomyces cerevisiae (strain ATCC 204508 / S288c) (Baker's yeast).